We begin with the raw amino-acid sequence, 341 residues long: Mitochondrial transcription factor 1 (341 aa).

The S-adenosyl-L-methionine site is built by Leu-23, Glu-77, Asp-101, and Asn-137.

Belongs to the class I-like SAM-binding methyltransferase superfamily. rRNA adenine N(6)-methyltransferase family.

It is found in the mitochondrion intermembrane space. Functionally, mitochondrial transcription factor that confers selective promoter recognition on the core subunit of the yeast mitochondrial RNA polymerase. Interacts with DNA in a non-specific manner. The sequence is that of Mitochondrial transcription factor 1 (MTF1) from Saccharomyces cerevisiae (strain ATCC 204508 / S288c) (Baker's yeast).